The sequence spans 415 residues: UDP-N-acetylglucosamine 1-carboxyvinyltransferase 1 (415 aa).

23 to 24 lines the phosphoenolpyruvate pocket; the sequence is KN. Arg-92 contacts UDP-N-acetyl-alpha-D-glucosamine. The active-site Proton donor is Cys-116. Cys-116 carries the post-translational modification 2-(S-cysteinyl)pyruvic acid O-phosphothioketal. UDP-N-acetyl-alpha-D-glucosamine is bound by residues 121-125, Asp-304, and Val-326; that span reads RPIDL.

It belongs to the EPSP synthase family. MurA subfamily.

Its subcellular location is the cytoplasm. The catalysed reaction is phosphoenolpyruvate + UDP-N-acetyl-alpha-D-glucosamine = UDP-N-acetyl-3-O-(1-carboxyvinyl)-alpha-D-glucosamine + phosphate. Its pathway is cell wall biogenesis; peptidoglycan biosynthesis. In terms of biological role, cell wall formation. Adds enolpyruvyl to UDP-N-acetylglucosamine. This Caldanaerobacter subterraneus subsp. tengcongensis (strain DSM 15242 / JCM 11007 / NBRC 100824 / MB4) (Thermoanaerobacter tengcongensis) protein is UDP-N-acetylglucosamine 1-carboxyvinyltransferase 1.